A 121-amino-acid chain; its full sequence is Small ribosomal subunit protein bS6 (121 aa).

A disordered region spans residues 102 to 121 (MMRNVEREEARKAQQQEYAA). Over residues 105-115 (NVEREEARKAQ) the composition is skewed to basic and acidic residues.

This sequence belongs to the bacterial ribosomal protein bS6 family.

Binds together with bS18 to 16S ribosomal RNA. This Polaromonas sp. (strain JS666 / ATCC BAA-500) protein is Small ribosomal subunit protein bS6.